The following is a 142-amino-acid chain: Universal stress protein G (142 aa).

It belongs to the universal stress protein A family.

In Salmonella typhi, this protein is Universal stress protein G (uspG).